The chain runs to 463 residues: L-seryl-tRNA(Sec) selenium transferase (463 aa).

Position 295 is an N6-(pyridoxal phosphate)lysine (Lys295).

This sequence belongs to the SelA family. As to quaternary structure, homodecamer; pentamer of dimers. Binds only one seryl-tRNA(Sec) per dimer. The cofactor is pyridoxal 5'-phosphate.

It is found in the cytoplasm. It catalyses the reaction L-seryl-tRNA(Sec) + selenophosphate + H(+) = L-selenocysteinyl-tRNA(Sec) + phosphate. It participates in aminoacyl-tRNA biosynthesis; selenocysteinyl-tRNA(Sec) biosynthesis; selenocysteinyl-tRNA(Sec) from L-seryl-tRNA(Sec) (bacterial route): step 1/1. Converts seryl-tRNA(Sec) to selenocysteinyl-tRNA(Sec) required for selenoprotein biosynthesis. This is L-seryl-tRNA(Sec) selenium transferase from Shigella flexneri serotype 5b (strain 8401).